A 95-amino-acid polypeptide reads, in one-letter code: DNA-directed RNA polymerase subunit Rpo11 (95 aa).

The protein belongs to the archaeal Rpo11/eukaryotic RPB11/RPC19 RNA polymerase subunit family. As to quaternary structure, part of the RNA polymerase complex.

It is found in the cytoplasm. It carries out the reaction RNA(n) + a ribonucleoside 5'-triphosphate = RNA(n+1) + diphosphate. DNA-dependent RNA polymerase (RNAP) catalyzes the transcription of DNA into RNA using the four ribonucleoside triphosphates as substrates. This is DNA-directed RNA polymerase subunit Rpo11 from Pyrococcus horikoshii (strain ATCC 700860 / DSM 12428 / JCM 9974 / NBRC 100139 / OT-3).